Reading from the N-terminus, the 562-residue chain is Arginine--tRNA ligase 1 (562 aa).

Positions 122–132 (PNIAKPFSMGH) match the 'HIGH' region motif.

Belongs to the class-I aminoacyl-tRNA synthetase family. In terms of assembly, monomer.

The protein localises to the cytoplasm. The enzyme catalyses tRNA(Arg) + L-arginine + ATP = L-arginyl-tRNA(Arg) + AMP + diphosphate. In Bacillus cereus (strain ZK / E33L), this protein is Arginine--tRNA ligase 1.